Here is a 206-residue protein sequence, read N- to C-terminus: GTP cyclohydrolase 1 (206 aa).

Basic and acidic residues predominate over residues 1-17 (MDAVTPKKDIPRPDSVR). The segment at 1–23 (MDAVTPKKDIPRPDSVRRPSQQE) is disordered. 3 residues coordinate Zn(2+): Cys-95, His-98, and Cys-166.

Belongs to the GTP cyclohydrolase I family. Toroid-shaped homodecamer, composed of two pentamers of five dimers.

It catalyses the reaction GTP + H2O = 7,8-dihydroneopterin 3'-triphosphate + formate + H(+). It functions in the pathway cofactor biosynthesis; 7,8-dihydroneopterin triphosphate biosynthesis; 7,8-dihydroneopterin triphosphate from GTP: step 1/1. The sequence is that of GTP cyclohydrolase 1 from Hyphomonas neptunium (strain ATCC 15444).